A 153-amino-acid chain; its full sequence is Small ribosomal subunit protein uS9 (153 aa).

Low complexity predominate over residues 1-19; sequence MTAPADEAPAVEDAPVAED. Disordered regions lie at residues 1–23 and 121–153; these read MTAPADEAPAVEDAPVAEDIAPV and LKKAGMLTRDSREKERKKYGLKKARKAPQYSKR. Residues 129 to 138 show a composition bias toward basic and acidic residues; it reads RDSREKERKK. A compositionally biased stretch (basic residues) spans 139-153; the sequence is YGLKKARKAPQYSKR.

Belongs to the universal ribosomal protein uS9 family.

The protein is Small ribosomal subunit protein uS9 of Saccharopolyspora erythraea (strain ATCC 11635 / DSM 40517 / JCM 4748 / NBRC 13426 / NCIMB 8594 / NRRL 2338).